The following is a 202-amino-acid chain: UPF0056 membrane protein CPn_1010/CP_0843/CPj1010/CpB1048 (202 aa).

6 helical membrane passes run 7 to 27 (LSLLFYVLFDSPGSIPVFVAL), 39 to 59 (VILRECLFALGALILFVTFGR), 61 to 81 (FFQFLDISLYAFQIIGGFLLF), 105 to 125 (PIFFPLAFPVITGPAVITALL), 137 to 157 (IIFTAMIIAWAFSLFTLLCSS), and 175 to 195 (FGIALLLMSVNLMLKGISIAF).

This sequence belongs to the UPF0056 (MarC) family.

The protein localises to the cell membrane. This Chlamydia pneumoniae (Chlamydophila pneumoniae) protein is UPF0056 membrane protein CPn_1010/CP_0843/CPj1010/CpB1048.